Here is a 397-residue protein sequence, read N- to C-terminus: MALKKPGSLTIAGSGIASIGHITLETLALIKEADKIFYAVTDPATECYIQENSRGDHFDLTTFYDTNKKRYESYVQMSEVMLRDVRAGRNVLGIFYGHPGVFVAPSHRAIAIAREEGFQAKMLPGISAEDYMFADLGFDPSTYGCMTQEATELLVRNKKLDPSIHNIIWQVGSVGVDTMVFDNGKFHLLVERLEKDFGLDHKIQHYIGAILPQSVTVKDTFAIRDLRKEEVLKQFTTTSTFYVPPRTPAPIDPKAVQALGLPATVTKGAQDWTGFQSVSPAYGPDEMRAVAALDSFVPSQEKAVVHASRAMQSLMVDLALRPALLEQYKADPVAFANTRNGLTAQEKFALGLKKPGPIFVVMRQLPSAIASGQEPSQEEIARADDATAFIIIYIVQG.

Positions 1-246 (MALKKPGSLT…TTSTFYVPPR (246 aa)) are methyltransferase domain. Active-site residues include R70, Y74, and Y96. S-adenosyl-L-methionine is bound by residues Y96, H98, V101, A128, Q170, G208, S239, and T240. Residues 247–365 (TPAPIDPKAV…GPIFVVMRQL (119 aa)) are clasp domain. The tract at residues 366-388 (PSAIASGQEPSQEEIARADDATA) is precursor leader. 2 positions are modified to N-methylisoleucine: I391 and I392. The residue at position 393 (Y393) is an N-methyltyrosine. At I394 the chain carries N-methylisoleucine. Residue V395 is modified to N-methylvaline.

The protein in the N-terminal section; belongs to the precorrin methyltransferase family. In terms of assembly, homodimer. In terms of processing, mroMA automethylates at Ile-391, Ile-392, Tyr-393, Ile-394 and Val-395 before being processed by the a prolyloligopeptidase which likely forms a peptidyl ester upon removal of the follower propeptide, which then undergoes macrocyclization with the N-terminus of the modified core peptide. Peptide backbone alpha-N-methylations change the physicochemical properties of amide bonds to provide structural constraints and other favorable characteristics including biological membrane permeability to peptides.

It participates in secondary metabolite biosynthesis. Fusion protein of the methyltransferase mroM1 and a type I borosin core peptide; part of the gene cluster that mediates the biosynthesis of a type I borosin, a highly methylated cyclic peptide with potent biological activities. Type I borosins derive from the C-terminus of the fusion protein, and it is the same protein that methylates its own C-terminus using S-adenosyl methionine (SAM). The C-terminus is subsequently cleaved off and macrocyclized by a prolyloligopeptidase to give the final product. This chain is Methyltransferase/ribosomally synthesized type I borosin cyclic peptide precursor mroMa1, found in Mycena rosella (Pink bonnet).